Reading from the N-terminus, the 814-residue chain is Glycogen phosphorylase (814 aa).

Lysine 662 carries the post-translational modification N6-(pyridoxal phosphate)lysine.

It belongs to the glycogen phosphorylase family. Pyridoxal 5'-phosphate is required as a cofactor.

It catalyses the reaction [(1-&gt;4)-alpha-D-glucosyl](n) + phosphate = [(1-&gt;4)-alpha-D-glucosyl](n-1) + alpha-D-glucose 1-phosphate. Phosphorylase is an important allosteric enzyme in carbohydrate metabolism. Enzymes from different sources differ in their regulatory mechanisms and in their natural substrates. However, all known phosphorylases share catalytic and structural properties. This Chlamydia trachomatis serovar D (strain ATCC VR-885 / DSM 19411 / UW-3/Cx) protein is Glycogen phosphorylase (glgP).